The following is a 432-amino-acid chain: Protein arginine N-methyltransferase 2 (432 aa).

A compositionally biased stretch (low complexity) spans 1–11 (MESSSECSSIS). The interval 1–22 (MESSSECSSISDFQDSTEGDDA) is disordered. Positions 29–88 (LCMREYVVICDYVATDNTQLSLCSGDKVLLLNAVSQDWWWVNHNGTCGYVPASHLHDALN) constitute an SH3 domain. The SAM-dependent MTase PRMT-type domain occupies 101-405 (DEEYYGSYKT…FERNSVWRRH (305 aa)). Positions 114, 123, 147, 170, and 199 each coordinate S-adenosyl-L-methionine. Residues Glu213 and Glu222 contribute to the active site.

It belongs to the class I-like SAM-binding methyltransferase superfamily. Protein arginine N-methyltransferase family. As to quaternary structure, interacts with ctnnb1.

Its subcellular location is the cytoplasm. The protein localises to the nucleus. The enzyme catalyses L-arginyl-[protein] + 2 S-adenosyl-L-methionine = N(omega),N(omega)-dimethyl-L-arginyl-[protein] + 2 S-adenosyl-L-homocysteine + 2 H(+). Arginine methyltransferase that methylates the guanidino nitrogens of arginyl residues in proteins such as histones. Involved in growth regulation. Involved in embryonic dorsal development. This chain is Protein arginine N-methyltransferase 2 (prmt2), found in Xenopus laevis (African clawed frog).